A 178-amino-acid chain; its full sequence is Caveolin-1 (178 aa).

The residue at position 2 (Ser2) is an N-acetylserine. The residue at position 2 (Ser2) is a Phosphoserine. The required for homooligomerization stretch occupies residues 2-94; sequence SGGKYVDSEG…WKASFTTFTV (93 aa). The Cytoplasmic portion of the chain corresponds to 2–104; sequence SGGKYVDSEG…TKYWFYRLLS (103 aa). N6-acetyllysine; alternate is present on Lys5. A Glycyl lysine isopeptide (Lys-Gly) (interchain with G-Cter in ubiquitin); alternate cross-link involves residue Lys5. Tyr6 bears the Phosphotyrosine mark. Position 9 is a phosphoserine (Ser9). Tyr14 is modified (phosphotyrosine; by ABL1). Tyr25 carries the phosphotyrosine modification. Residues Lys26, Lys30, Lys39, Lys47, and Lys57 each participate in a glycyl lysine isopeptide (Lys-Gly) (interchain with G-Cter in ubiquitin) cross-link. Residues 82 to 94 are interaction with CAVIN3; it reads DGIWKASFTTFTV. The helical intramembrane region spans 105–125; sequence ALFGIPMALIWGIYFAILSFL. Over 126-178 the chain is Cytoplasmic; sequence HIWAVVPCIKSFLIEIQCISRVYSIYVHTFCDPLFEAIGKIFSNIRINMQKEI. An interacts with SPRY1, SPRY2, SPRY3 and SPRY4 region spans residues 131–142; it reads VPCIKSFLIEIQ. S-palmitoyl cysteine attachment occurs at residues Cys133, Cys143, and Cys156. Positions 149-160 are interacts with SPRY1, SPRY2, and SPRY4; the sequence is SIYVHTFCDPLF. Residues 167–178 form an interacts with SPRY1, SPRY2, SPRY3 and SPRY4 region; that stretch reads FSNIRINMQKEI.

The protein belongs to the caveolin family. In terms of assembly, homooligomer. Interacts with GLIPR2. Interacts with NOSTRIN. Interacts with SNAP25 and STX1A. Interacts (via the N-terminus) with DPP4; the interaction is direct. Interacts with CTNNB1, CDH1 and JUP. Interacts with PACSIN2; this interaction induces membrane tubulation. Interacts with SLC7A9. Interacts with BMX and BTK. Interacts with TGFBR1. Interacts with CAVIN3 (via leucine-zipper domain) in a cholesterol-sensitive manner. Interacts with CAVIN1. Interacts with EHD2 in a cholesterol-dependent manner. Forms a ternary complex with UBXN6 and VCP; mediates CAV1 targeting to lysosomes for degradation. Interacts with ABCG1; this interaction regulates ABCG1-mediated cholesterol efflux. Interacts with NEU3; this interaction enhances NEU3 sialidase activity within caveola. Interacts (via C-terminus) with SPRY1, SPRY2 (via C-terminus), SPRY3, and SPRY4. Interacts with IGFBP5; this interaction allows trafficking of IGFBP5 from the plasma membrane to the nucleus. Phosphorylated at Tyr-14 by ABL1 in response to oxidative stress. Post-translationally, ubiquitinated. Undergo monoubiquitination and multi- and/or polyubiquitination. Monoubiquitination of N-terminal lysines promotes integration in a ternary complex with UBXN6 and VCP which promotes oligomeric CAV1 targeting to lysosomes for degradation. Ubiquitinated by ZNRF1; leading to degradation and modulation of the TLR4-mediated immune response.

The protein resides in the golgi apparatus membrane. Its subcellular location is the cell membrane. It is found in the membrane. The protein localises to the caveola. It localises to the membrane raft. May act as a scaffolding protein within caveolar membranes. Forms a stable heterooligomeric complex with CAV2 that targets to lipid rafts and drives caveolae formation. Mediates the recruitment of CAVIN proteins (CAVIN1/2/3/4) to the caveolae. Interacts directly with G-protein alpha subunits and can functionally regulate their activity. Involved in the costimulatory signal essential for T-cell receptor (TCR)-mediated T-cell activation. Its binding to DPP4 induces T-cell proliferation and NF-kappa-B activation in a T-cell receptor/CD3-dependent manner. Recruits CTNNB1 to caveolar membranes and may regulate CTNNB1-mediated signaling through the Wnt pathway. Negatively regulates TGFB1-mediated activation of SMAD2/3 by mediating the internalization of TGFBR1 from membrane rafts leading to its subsequent degradation. Binds 20(S)-hydroxycholesterol (20(S)-OHC). This is Caveolin-1 (CAV1) from Muntiacus muntjak (Barking deer).